The sequence spans 469 residues: Acetyl-CoA decarbonylase/synthase complex subunit beta 1 (469 aa).

Residues Cys189, Cys192, Cys278, and Cys280 each coordinate [Ni-Fe-S] cluster.

The protein belongs to the CdhC family. In terms of assembly, monomer. The ACDS complex is made up of alpha, epsilon, beta, gamma and delta chains with a probable stoichiometry of (alpha(2)epsilon(2))(4)-beta(8)-(gamma(1)delta(1))(8) (Potential). [Ni-Fe-S] cluster serves as cofactor.

The catalysed reaction is Co(I)-[corrinoid Fe-S protein] + acetyl-CoA + H(+) = methyl-Co(III)-[corrinoid Fe-S protein] + CO + CoA. Its pathway is one-carbon metabolism; methanogenesis from acetate. Part of a complex that catalyzes the reversible cleavage of acetyl-CoA, allowing growth on acetate as sole source of carbon and energy. The alpha-epsilon complex generates CO from CO(2), while the beta subunit (this protein) combines the CO with CoA and a methyl group to form acetyl-CoA. The methyl group, which is incorporated into acetyl-CoA, is transferred to the beta subunit by a corrinoid iron-sulfur protein (the gamma-delta complex). This is Acetyl-CoA decarbonylase/synthase complex subunit beta 1 (cdhC1) from Methanosarcina acetivorans (strain ATCC 35395 / DSM 2834 / JCM 12185 / C2A).